Reading from the N-terminus, the 355-residue chain is Histidinol-phosphate aminotransferase (355 aa).

Lys218 is modified (N6-(pyridoxal phosphate)lysine).

The protein belongs to the class-II pyridoxal-phosphate-dependent aminotransferase family. Histidinol-phosphate aminotransferase subfamily. Homodimer. Requires pyridoxal 5'-phosphate as cofactor.

The enzyme catalyses L-histidinol phosphate + 2-oxoglutarate = 3-(imidazol-4-yl)-2-oxopropyl phosphate + L-glutamate. It functions in the pathway amino-acid biosynthesis; L-histidine biosynthesis; L-histidine from 5-phospho-alpha-D-ribose 1-diphosphate: step 7/9. The polypeptide is Histidinol-phosphate aminotransferase (Chlorobium limicola (strain DSM 245 / NBRC 103803 / 6330)).